The chain runs to 1075 residues: Ataxin-2-like protein (1075 aa).

An N-acetylmethionine modification is found at Met-1. Positions 1 to 12 (MLKPQPLQQPSQ) are enriched in low complexity. The segment at 1–115 (MLKPQPLQQP…KGPPQSPVFE (115 aa)) is disordered. An interaction with MPL region spans residues 98–121 (SARGQSTGKGPPQSPVFEGVYNNS). Phosphoserine is present on residues Ser-103 and Ser-111. Tyr-118 is subject to Phosphotyrosine. One can recognise a Sm domain in the interval 122–199 (RMLHFLTAVV…VMLVHFRNVD (78 aa)). Lys-207 carries the post-translational modification N6-acetyllysine. Residue Ser-238 is modified to Phosphoserine. Tyr-264 bears the Phosphotyrosine mark. Phosphoserine is present on Ser-306. Residue Tyr-309 is modified to Phosphotyrosine. A compositionally biased stretch (basic and acidic residues) spans 316–328 (ENDDGRTEEEKHS). Disordered regions lie at residues 316-521 (ENDD…LEPQ), 551-697 (QFKL…SIPV), 733-770 (VSNSVPGQQGKYRGAKGSLPPQRSDQHQPASAPPMMQA), 820-849 (SNPRMLTSGSHPQAIVSSSTPQYPSAEQPT), 865-940 (ATQL…SSFP), and 1022-1045 (PYIGHPQGEQPGQAPGFPGGADDR). A compositionally biased stretch (polar residues) spans 330-342 (VQRQGSGRESPSL). 2 positions are modified to phosphoserine: Ser-335 and Ser-339. Lys-348 is covalently cross-linked (Glycyl lysine isopeptide (Lys-Gly) (interchain with G-Cter in SUMO2)). The residue at position 349 (Tyr-349) is a Phosphotyrosine. Arg-361 carries the asymmetric dimethylarginine modification. Residues 363 to 380 (GVRCSSSRGGRPGLSSLP) show a composition bias toward low complexity. Phosphoserine occurs at positions 391 and 409. Positions 421-433 (TLSSPSNRPSGET) are enriched in polar residues. A Phosphoserine modification is found at Ser-449. Low complexity-rich tracts occupy residues 450-462 (PKSAAPAPISASC) and 471-485 (VPTSSASIPVTSSVS). A phosphoserine mark is found at Ser-493 and Ser-496. A compositionally biased stretch (basic and acidic residues) spans 505 to 516 (DVKELSTKEPGR). A phosphoserine mark is found at Ser-557, Ser-558, Ser-559, and Ser-563. Positions 571–584 (ILKEEPKGKEKEVD) are enriched in basic and acidic residues. Position 594 is a phosphoserine (Ser-594). Residue Thr-632 is modified to Phosphothreonine. Ser-634, Ser-674, Ser-680, and Ser-684 each carry phosphoserine. Composition is skewed to low complexity over residues 678-694 (STSTPTSPGPRTHSTPS) and 761-770 (PASAPPMMQA). Over residues 874–898 (QPATTPTGSQPQSQHAAPSPVQHQA) the composition is skewed to polar residues. Low complexity-rich tracts occupy residues 931 to 940 (SAQSPQSSFP) and 1025 to 1037 (GHPQGEQPGQAPG).

The protein belongs to the ataxin-2 family. Interacts with MPL/TPOR and EPOR and dissociates after ligand stimulation. Interacts with DDX6, G3BP1, and ATXN2. Interacts with PRMT1. Interacts with CIC and ATXN1. In terms of processing, thrombopoietin triggers the phosphorylation on tyrosine residues in a way that is dependent on MPL C-terminal domain. Asymmetrically dimethylated. Probably methylated by PRMT1. Expressed at high levels in thymus, lymph node, spleen, fetal kidney and adult testis. Constitutively associated with MPL and EPOR in hematopoietic cells.

The protein resides in the membrane. It is found in the cytoplasm. Its subcellular location is the nucleus speckle. It localises to the cytoplasmic granule. Functionally, involved in the regulation of stress granule and P-body formation. This chain is Ataxin-2-like protein (ATXN2L), found in Homo sapiens (Human).